The sequence spans 152 residues: SsrA-binding protein (152 aa).

It belongs to the SmpB family.

Its subcellular location is the cytoplasm. Required for rescue of stalled ribosomes mediated by trans-translation. Binds to transfer-messenger RNA (tmRNA), required for stable association of tmRNA with ribosomes. tmRNA and SmpB together mimic tRNA shape, replacing the anticodon stem-loop with SmpB. tmRNA is encoded by the ssrA gene; the 2 termini fold to resemble tRNA(Ala) and it encodes a 'tag peptide', a short internal open reading frame. During trans-translation Ala-aminoacylated tmRNA acts like a tRNA, entering the A-site of stalled ribosomes, displacing the stalled mRNA. The ribosome then switches to translate the ORF on the tmRNA; the nascent peptide is terminated with the 'tag peptide' encoded by the tmRNA and targeted for degradation. The ribosome is freed to recommence translation, which seems to be the essential function of trans-translation. This is SsrA-binding protein from Rickettsia massiliae (strain Mtu5).